Consider the following 905-residue polypeptide: Chitin synthase 3B (905 aa).

Residues 1–10 (MAYNGRDQEY) show a composition bias toward basic and acidic residues. The segment at 1–136 (MAYNGRDQEY…GGGGGLGRSK (136 aa)) is disordered. Residues 81 to 93 (GPTGYGDTGGSFG) show a composition bias toward gly residues. A glycan (N-linked (GlcNAc...) asparagine) is linked at asparagine 536. A helical membrane pass occupies residues 562 to 584 (MFFLHIQLIYTTLNTMFAWFSLG). Residue asparagine 601 is glycosylated (N-linked (GlcNAc...) asparagine). The next 6 membrane-spanning stretches (helical) occupy residues 618 to 638 (IVNA…FILA), 653 to 673 (SFMV…YLVV), 705 to 725 (VILV…FMYL), 733 to 753 (SFPY…VYAF), 832 to 852 (TGLV…ITST), and 873 to 893 (FLLY…LWFL).

This sequence belongs to the chitin synthase family. Class III subfamily.

Its subcellular location is the cell membrane. It catalyses the reaction [(1-&gt;4)-N-acetyl-beta-D-glucosaminyl](n) + UDP-N-acetyl-alpha-D-glucosamine = [(1-&gt;4)-N-acetyl-beta-D-glucosaminyl](n+1) + UDP + H(+). Polymerizes chitin, a structural polymer of the cell wall and septum, by transferring the sugar moiety of UDP-GlcNAc to the non-reducing end of the growing chitin polymer. Plays essential functions in fungal survival and host infection. This Gibberella zeae (strain ATCC MYA-4620 / CBS 123657 / FGSC 9075 / NRRL 31084 / PH-1) (Wheat head blight fungus) protein is Chitin synthase 3B.